Reading from the N-terminus, the 187-residue chain is Meiotically up-regulated protein C1442.13c (187 aa).

2 disordered regions span residues 15-46 (QWEN…LSNE) and 119-145 (IQEG…PAIN). A compositionally biased stretch (basic residues) spans 26–41 (PPRKPKIVQPKKKPSK). One can recognise a G-patch domain in the interval 145–187 (NNGKGKQLLEMMGWSRGKGLGSENQGMVDPVVAVVKNNKQGLH).

The protein localises to the nucleus. It localises to the cytoplasm. It is found in the cytoskeleton. The protein resides in the microtubule organizing center. Its subcellular location is the spindle pole body. Has a role in meiosis and sporulation. Required for meiotic chromosome segregation. This chain is Meiotically up-regulated protein C1442.13c, found in Schizosaccharomyces pombe (strain 972 / ATCC 24843) (Fission yeast).